Here is a 490-residue protein sequence, read N- to C-terminus: Cytochrome P450 2C19 (490 aa).

Cysteine 435 provides a ligand contact to heme.

Belongs to the cytochrome P450 family. Requires heme as cofactor.

Its subcellular location is the endoplasmic reticulum membrane. It is found in the microsome membrane. The catalysed reaction is an organic molecule + reduced [NADPH--hemoprotein reductase] + O2 = an alcohol + oxidized [NADPH--hemoprotein reductase] + H2O + H(+). The enzyme catalyses (5Z,8Z,11Z)-eicosatrienoate + reduced [NADPH--hemoprotein reductase] + O2 = 19-hydroxy-(5Z,8Z,11Z)-eicosatrienoate + oxidized [NADPH--hemoprotein reductase] + H2O + H(+). It carries out the reaction (5Z,8Z,11Z,14Z)-eicosatetraenoate + reduced [NADPH--hemoprotein reductase] + O2 = 19-hydroxy-(5Z,8Z,11Z,14Z)-eicosatetraenoate + oxidized [NADPH--hemoprotein reductase] + H2O + H(+). It catalyses the reaction (5Z,8Z,11Z,14Z,17Z)-eicosapentaenoate + reduced [NADPH--hemoprotein reductase] + O2 = 19-hydroxy-(5Z,8Z,11Z,14Z,17Z)-eicosapentaenoate + oxidized [NADPH--hemoprotein reductase] + H2O + H(+). The catalysed reaction is (4Z,7Z,10Z,13Z,16Z,19Z)-docosahexaenoate + reduced [NADPH--hemoprotein reductase] + O2 = 21-hydroxy-(4Z,7Z,10Z,13Z,16Z,19Z)-docosahexaenoate + oxidized [NADPH--hemoprotein reductase] + H2O + H(+). The enzyme catalyses (5Z,8Z,11Z,14Z)-eicosatetraenoate + reduced [NADPH--hemoprotein reductase] + O2 = (8R,9S)-epoxy-(5Z,11Z,14Z)-eicosatrienoate + oxidized [NADPH--hemoprotein reductase] + H2O + H(+). It carries out the reaction (5Z,8Z,11Z,14Z)-eicosatetraenoate + reduced [NADPH--hemoprotein reductase] + O2 = (11R,12S)-epoxy-(5Z,8Z,14Z)-eicosatrienoate + oxidized [NADPH--hemoprotein reductase] + H2O + H(+). It catalyses the reaction (5Z,8Z,11Z,14Z)-eicosatetraenoate + reduced [NADPH--hemoprotein reductase] + O2 = (11S,12R)-epoxy-(5Z,8Z,14Z)-eicosatrienoate + oxidized [NADPH--hemoprotein reductase] + H2O + H(+). The catalysed reaction is (5Z,8Z,11Z,14Z)-eicosatetraenoate + reduced [NADPH--hemoprotein reductase] + O2 = (14R,15S)-epoxy-(5Z,8Z,11Z)-eicosatrienoate + oxidized [NADPH--hemoprotein reductase] + H2O + H(+). The enzyme catalyses (5Z,8Z,11Z,14Z,17Z)-eicosapentaenoate + reduced [NADPH--hemoprotein reductase] + O2 = (17R,18S)-epoxy-(5Z,8Z,11Z,14Z)-eicosatetraenoate + oxidized [NADPH--hemoprotein reductase] + H2O + H(+). It carries out the reaction (4Z,7Z,10Z,13Z,16Z,19Z)-docosahexaenoate + reduced [NADPH--hemoprotein reductase] + O2 = (19R,20S)-epoxy-(4Z,7Z,10Z,13Z,16Z)-docosapentaenoate + oxidized [NADPH--hemoprotein reductase] + H2O + H(+). It catalyses the reaction (4Z,7Z,10Z,13Z,16Z,19Z)-docosahexaenoate + reduced [NADPH--hemoprotein reductase] + O2 = (19S,20R)-epoxy-(4Z,7Z,10Z,13Z,16Z)-docosapentaenoate + oxidized [NADPH--hemoprotein reductase] + H2O + H(+). The catalysed reaction is (4R)-limonene + reduced [NADPH--hemoprotein reductase] + O2 = (1R,5S)-carveol + oxidized [NADPH--hemoprotein reductase] + H2O + H(+). The enzyme catalyses (4S)-limonene + reduced [NADPH--hemoprotein reductase] + O2 = (1S,5R)-carveol + oxidized [NADPH--hemoprotein reductase] + H2O + H(+). It carries out the reaction (4S)-limonene + reduced [NADPH--hemoprotein reductase] + O2 = (4S)-perillyl alcohol + oxidized [NADPH--hemoprotein reductase] + H2O + H(+). It catalyses the reaction fenbendazole + reduced [NADPH--hemoprotein reductase] + O2 = 4'-hydroxyfenbendazole + oxidized [NADPH--hemoprotein reductase] + H2O + H(+). It participates in lipid metabolism; fatty acid metabolism. The protein operates within terpene metabolism; (4R)-limonene degradation. In terms of biological role, a cytochrome P450 monooxygenase involved in the metabolism of polyunsaturated fatty acids (PUFA). Mechanistically, uses molecular oxygen inserting one oxygen atom into a substrate, and reducing the second into a water molecule, with two electrons provided by NADPH via cytochrome P450 reductase (NADPH--hemoprotein reductase). Catalyzes the hydroxylation of carbon-hydrogen bonds. Hydroxylates PUFA specifically at the omega-1 position. Catalyzes the epoxidation of double bonds of PUFA. Also metabolizes plant monoterpenes such as limonene. Oxygenates (R)- and (S)-limonene to produce carveol and perillyl alcohol. Responsible for the metabolism of a number of therapeutic agents such as the anticonvulsant drug S-mephenytoin, omeprazole, proguanil, certain barbiturates, diazepam, propranolol, citalopram and imipramine. Hydroxylates fenbendazole at the 4' position. The chain is Cytochrome P450 2C19 (CYP2C19) from Homo sapiens (Human).